A 264-amino-acid polypeptide reads, in one-letter code: MKAVVLAVAVLFLTGSQARHFWQRDEPQTPWDRVKDFATVYVDAIKESGRDYVAQLETSVLGKHLNLKLLDNWDTLSTTFSKLRADLGPVTQEFWDNLEKDTEWLRQEMNKDLQEVKQKVQPYLDNFHKKMQEEMERYREKVGPLGTELREGARQKLQELQEKLTPLGEDLRDRAREHVDTLRTQLAPYSDDMRQRLTQRLEALRDSTTFADYQAKASEHLKTFSEKAKPALEDLRQGLLPVLESLKASILSSIDQATKQLTAQ.

An N-terminal signal peptide occupies residues 1-18 (MKAVVLAVAVLFLTGSQA). 2 consecutive repeat copies span residues 67 to 88 (LKLL…ADLG) and 89 to 110 (PVTQ…QEMN). Residues 67–264 (LKLLDNWDTL…DQATKQLTAQ (198 aa)) form a 10 X approximate tandem repeats region. A Methionine sulfoxide modification is found at methionine 109. The 3; half-length repeat unit spans residues 111–121 (KDLQEVKQKVQ). Tandem repeats lie at residues 122–143 (PYLD…EKVG), 144–165 (PLGT…EKLT), 166–187 (PLGE…TQLA), 188–207 (PYSD…LRDS), and 208–229 (TTFA…EKAK). The 9; half-length repeat unit spans residues 230-240 (PALEDLRQGLL). Residues 241–264 (PVLESLKASILSSIDQATKQLTAQ) form repeat 10.

This sequence belongs to the apolipoprotein A1/A4/E family. In terms of assembly, homodimer. Interacts with APOA1BP and CLU. Component of a sperm activating protein complex (SPAP), consisting of APOA1, an immunoglobulin heavy chain, an immunoglobulin light chain and albumin. Interacts with NDRG1. Interacts with SCGB3A2. Interacts with NAXE and YJEFN3. Post-translationally, glycosylated. In terms of processing, palmitoylated. Phosphorylation sites are present in the extracellular medium.

It localises to the secreted. In terms of biological role, participates in the reverse transport of cholesterol from tissues to the liver for excretion by promoting cholesterol efflux from tissues and by acting as a cofactor for the lecithin cholesterol acyltransferase (LCAT). As part of the SPAP complex, activates spermatozoa motility. The sequence is that of Apolipoprotein A-I (APOA1) from Chinchilla lanigera (Long-tailed chinchilla).